Reading from the N-terminus, the 85-residue chain is Large ribosomal subunit protein bL31B (85 aa).

It belongs to the bacterial ribosomal protein bL31 family. Type B subfamily. As to quaternary structure, part of the 50S ribosomal subunit.

The chain is Large ribosomal subunit protein bL31B from Porphyromonas gingivalis (strain ATCC 33277 / DSM 20709 / CIP 103683 / JCM 12257 / NCTC 11834 / 2561).